A 355-amino-acid chain; its full sequence is Phosphoribosylformylglycinamidine cyclo-ligase (355 aa).

Belongs to the AIR synthase family.

The protein resides in the cytoplasm. The catalysed reaction is 2-formamido-N(1)-(5-O-phospho-beta-D-ribosyl)acetamidine + ATP = 5-amino-1-(5-phospho-beta-D-ribosyl)imidazole + ADP + phosphate + H(+). The protein operates within purine metabolism; IMP biosynthesis via de novo pathway; 5-amino-1-(5-phospho-D-ribosyl)imidazole from N(2)-formyl-N(1)-(5-phospho-D-ribosyl)glycinamide: step 2/2. The chain is Phosphoribosylformylglycinamidine cyclo-ligase from Methylobacterium nodulans (strain LMG 21967 / CNCM I-2342 / ORS 2060).